The following is a 643-amino-acid chain: Fructose-1,6-bisphosphatase class 3 (643 aa).

The protein belongs to the FBPase class 3 family. It depends on Mn(2+) as a cofactor.

It carries out the reaction beta-D-fructose 1,6-bisphosphate + H2O = beta-D-fructose 6-phosphate + phosphate. Its pathway is carbohydrate biosynthesis; gluconeogenesis. This Lacticaseibacillus paracasei (strain ATCC 334 / BCRC 17002 / CCUG 31169 / CIP 107868 / KCTC 3260 / NRRL B-441) (Lactobacillus paracasei) protein is Fructose-1,6-bisphosphatase class 3.